The sequence spans 763 residues: Sphingoid long-chain bases kinase 1 (763 aa).

Positions 34-81 (TGGSQQSSPIVFPEKRNKKVKASSRRGEVTNDPQVKPKPDEHRIDIGG) are disordered. Residues 58–81 (RRGEVTNDPQVKPKPDEHRIDIGG) are compositionally biased toward basic and acidic residues. A DAGKc domain is found at 245–384 (KSAPKMLVIL…TDVFAVEWIH (140 aa)). ATP contacts are provided by residues 255–257 (NPR) and T287. 313 to 316 (GGDG) serves as a coordination point for substrate. D315 serves as the catalytic Proton donor/acceptor. ATP contacts are provided by residues E320, 345 to 347 (GSD), and R418. Residues 561-603 (MGLTSVQDPPTRCSWGNTGGQDREDISSTVSDPGPIWDAGPKW) are disordered. 733–735 (DGE) contributes to the ATP binding site.

In terms of tissue distribution, expressed in roots, stems, leaves and at higher levels in flowers.

In terms of biological role, involved in the production of sphingolipid metabolites. Active on sphingosine, phytosphingosine (PHS, 4-hydroxysphinganine), D-erythro-dihydrosphingosine, D-erythro-sphingosine and trans-4, trans-8-sphingadienine, an LCB found exclusively in plants, but not on N-acetyl-dihydrosphingosine (C2-dihydroceramide) and D-threo-dihydrosphingosine. The protein is Sphingoid long-chain bases kinase 1 (LCBK1) of Arabidopsis thaliana (Mouse-ear cress).